A 110-amino-acid chain; its full sequence is Protein RnfH (110 aa).

The disordered stretch occupies residues 86–110 (RQRRVEKSRQEGSVEGRKWLPKDSR). Over residues 88 to 110 (RRVEKSRQEGSVEGRKWLPKDSR) the composition is skewed to basic and acidic residues.

Belongs to the UPF0125 (RnfH) family.

The chain is Protein RnfH from Paraburkholderia phymatum (strain DSM 17167 / CIP 108236 / LMG 21445 / STM815) (Burkholderia phymatum).